Here is a 268-residue protein sequence, read N- to C-terminus: uncharacterized protein (268 aa).

The first 18 residues, 1–18, serve as a signal peptide directing secretion; the sequence is MRGFLLLSLGVFSFSALA. Domain stretches follow at residues 24–184 and 185–268; these read SHDL…ELLP and SPAT…NWLR. Cysteines 110 and 115 form a disulfide.

As to quaternary structure, monomer.

Its subcellular location is the periplasm. This is an uncharacterized protein from Pseudomonas aeruginosa (strain ATCC 15692 / DSM 22644 / CIP 104116 / JCM 14847 / LMG 12228 / 1C / PRS 101 / PAO1).